Consider the following 137-residue polypeptide: SPbeta prophage-derived uncharacterized protein YoqU (137 aa).

In Bacillus subtilis (strain 168), this protein is SPbeta prophage-derived uncharacterized protein YoqU (yoqU).